The following is an 85-amino-acid chain: Hepcidin (85 aa).

A signal peptide spans 1-22 (MALSTRIQAACLLLLLLASVAS). A propeptide spanning residues 23 to 54 (VSVLPHQTGQLTDLRAQDTAGAEAGLQPTLQL) is cleaved from the precursor. Intrachain disulfides connect C67-C83, C70-C73, C71-C79, and C74-C82.

It belongs to the hepcidin family. In terms of assembly, interacts with SLC40A1; this interaction promotes SLC40A1 rapid ubiquitination.

The protein localises to the secreted. Functionally, liver-produced hormone that constitutes the main circulating regulator of iron absorption and distribution across tissues. Acts by promoting endocytosis and degradation of ferroportin/SLC40A1, leading to the retention of iron in iron-exporting cells and decreased flow of iron into plasma. Controls the major flows of iron into plasma: absorption of dietary iron in the intestine, recycling of iron by macrophages, which phagocytose old erythrocytes and other cells, and mobilization of stored iron from hepatocytes. Its function is as follows. Has strong antimicrobial activity against E.coli ML35P N.cinerea and weaker against S.epidermidis, S.aureus and group b streptococcus bacteria. Active against the fungus C.albicans. No activity against P.aeruginosa. The chain is Hepcidin (HAMP) from Canis lupus familiaris (Dog).